A 428-amino-acid chain; its full sequence is Sporulation kinase B (428 aa).

Over 1 to 6 the chain is Cytoplasmic; it reads MEILKD. The chain crosses the membrane as a helical span at residues 7-27; the sequence is YLLHICFILFPILLYQVFWLG. Residues 28–37 are Extracellular-facing; the sequence is KPAILVPKIN. A helical membrane pass occupies residues 38–58; sequence SGLVTLFACGASVLCIIFPIH. Residues 59 to 68 are Cytoplasmic-facing; it reads EMDYIQYGLQ. A helical membrane pass occupies residues 69 to 89; the sequence is MIPVIICLFYISTASGLTVAA. The Extracellular segment spans residues 90-99; that stretch reads SVLCFELLFY. The helical transmembrane segment at 100–120 threads the bilayer; that stretch reads EPSAMFVFTLLPFLIIIPILF. The Cytoplasmic segment spans residues 121 to 132; sequence QKKWPFMSKAKK. A helical transmembrane segment spans residues 133-153; sequence LLLSLLISCVEIFLFFASSWI. The Extracellular portion of the chain corresponds to 154–166; the sequence is LSALNILNFQKSG. A helical membrane pass occupies residues 167 to 187; the sequence is IFVYEAAVSGLFRSSVLLLSI. At 188–428 the chain is on the cytoplasmic side; sequence YIIESIAENI…TIKLPADLPH (241 aa). The Histidine kinase domain occupies 218–426; that stretch reads SVAHEVRNPL…TVTIKLPADL (209 aa). Residue His-221 is modified to Phosphohistidine; by autocatalysis.

It localises to the cell membrane. The catalysed reaction is ATP + protein L-histidine = ADP + protein N-phospho-L-histidine.. In terms of biological role, phosphorylates the sporulation-regulatory proteins spo0A and spo0F. Spo0F is required for the KinB activity. The chain is Sporulation kinase B (kinB) from Bacillus subtilis (strain 168).